The chain runs to 799 residues: MVKFSKQFEGQLVPEWKHAFVDYSLLKKDLKRMQHDYSPQGTIITTSTPHDHHQQQQSVAAPSSYNLSHCRLLLHKLPAAFFGSNNADHAGAIQVRRRVGRGEVYETEVTPEMETTAATAAREFFARLDAQLNKVNHFYKAKEEEFLHRGHSLRKQMDILLDLKSRSSSSLSGHHRAAAGDDPSISSSSATSGAEDESTRYVTSATDTDESQHETAVMRDPEELSAEQGLEDSGSLSRQSLGRTVSSCQRKNLKINIPLTTPCRTISALTDLLRDDLVSQPKNKCDSDAGITFTTINKTKLRHAEKMIKGAFIELYKGLGYLTTYRNLNMMAFVKILKKFEKVSGKQVLSVYLRAVESSYFNSSGEALKLMDEVEDVFVRHFAAGNRRKAMKYLKPTQRKESHTVTFFIGLMTGCFVALFLGYCIMAHIAGMYTQRRDSIYMETVYPVFSMFSLMFLHLFMYGCNMVAWRKARINYSFIFEFAAGRELKYRDVFLVCTASMAVIVGVMFAHLSLAVRGFHAQAIPGFLLLGFLLLLFCPFNMVYRSTRFQFLRILRNIVFSPLYKVVMVDFFMADQLCSQVPMLRSLEYVACYYISGSYRTQEYGYCINTKHIRDLAYAVSFLPYYWRAMQCARRWFDESDTGHLVNLGKYVSAMLAAGAKVAYEKDRSLGSLSLLVIVSSSATMYQLYWDFVKDWGLLQPNSKNPWLRNDLILKSKSIYYLSMGLNLVLRLAWLQTVIHPNFGSLDSRVTSFFLAALEVIRRGHWNFYRLENEHLNNAGKFRAVKTVPLPFHEADEED.

Topologically, residues 1–406 are cytoplasmic; sequence MVKFSKQFEG…TQRKESHTVT (406 aa). The 353-residue stretch at 2-354 folds into the SPX domain; it reads VKFSKQFEGQ…GKQVLSVYLR (353 aa). Residues 170-243 form a disordered region; sequence SLSGHHRAAA…GSLSRQSLGR (74 aa). Residues 180–193 are compositionally biased toward low complexity; the sequence is GDDPSISSSSATSG. The segment covering 210-222 has biased composition (basic and acidic residues); it reads ESQHETAVMRDPE. Residues 234-243 show a composition bias toward polar residues; the sequence is GSLSRQSLGR. A helical transmembrane segment spans residues 407–427; that stretch reads FFIGLMTGCFVALFLGYCIMA. At 428-447 the chain is on the extracellular side; the sequence is HIAGMYTQRRDSIYMETVYP. A helical transmembrane segment spans residues 448–468; it reads VFSMFSLMFLHLFMYGCNMVA. Residues 469-492 lie on the Cytoplasmic side of the membrane; the sequence is WRKARINYSFIFEFAAGRELKYRD. The chain crosses the membrane as a helical span at residues 493–513; the sequence is VFLVCTASMAVIVGVMFAHLS. The Extracellular segment spans residues 514–522; sequence LAVRGFHAQ. A helical membrane pass occupies residues 523–543; the sequence is AIPGFLLLGFLLLLFCPFNMV. At 544–672 the chain is on the cytoplasmic side; the sequence is YRSTRFQFLR…AYEKDRSLGS (129 aa). The 192-residue stretch at 608-799 folds into the EXS domain; that stretch reads INTKHIRDLA…LPFHEADEED (192 aa). A helical membrane pass occupies residues 673–693; that stretch reads LSLLVIVSSSATMYQLYWDFV. Over 694–718 the chain is Extracellular; it reads KDWGLLQPNSKNPWLRNDLILKSKS. The helical transmembrane segment at 719-739 threads the bilayer; the sequence is IYYLSMGLNLVLRLAWLQTVI. Over 740 to 799 the chain is Cytoplasmic; that stretch reads HPNFGSLDSRVTSFFLAALEVIRRGHWNFYRLENEHLNNAGKFRAVKTVPLPFHEADEED.

Belongs to the SYG1 (TC 2.A.94) family. Expressed in roots and flowers.

The protein localises to the cell membrane. In terms of biological role, may transport inorganic phosphate (Pi). In Oryza sativa subsp. japonica (Rice), this protein is Phosphate transporter PHO1-1 (PHO1-1).